A 249-amino-acid chain; its full sequence is Methylthioribulose-1-phosphate dehydratase (249 aa).

Positions 103 and 105 each coordinate Zn(2+).

The protein belongs to the aldolase class II family. MtnB subfamily. It depends on Zn(2+) as a cofactor.

It catalyses the reaction 5-(methylsulfanyl)-D-ribulose 1-phosphate = 5-methylsulfanyl-2,3-dioxopentyl phosphate + H2O. It participates in amino-acid biosynthesis; L-methionine biosynthesis via salvage pathway; L-methionine from S-methyl-5-thio-alpha-D-ribose 1-phosphate: step 2/6. Its function is as follows. Catalyzes the dehydration of methylthioribulose-1-phosphate (MTRu-1-P) into 2,3-diketo-5-methylthiopentyl-1-phosphate (DK-MTP-1-P). The polypeptide is Methylthioribulose-1-phosphate dehydratase (Leptospira interrogans serogroup Icterohaemorrhagiae serovar copenhageni (strain Fiocruz L1-130)).